The primary structure comprises 212 residues: Ribosomal RNA small subunit methyltransferase G (212 aa).

Residues Gly-80, Leu-85, 131-132 (AE), and Arg-146 contribute to the S-adenosyl-L-methionine site.

Belongs to the methyltransferase superfamily. RNA methyltransferase RsmG family.

It localises to the cytoplasm. The enzyme catalyses guanosine(527) in 16S rRNA + S-adenosyl-L-methionine = N(7)-methylguanosine(527) in 16S rRNA + S-adenosyl-L-homocysteine. Its function is as follows. Specifically methylates the N7 position of guanine in position 527 of 16S rRNA. This chain is Ribosomal RNA small subunit methyltransferase G, found in Xanthomonas campestris pv. campestris (strain B100).